We begin with the raw amino-acid sequence, 298 residues long: MTAEIIDGKAFAARLRERVGALAEKFEAAAGRKPGLAVVLVGEDPASEVYVRNKGKATLAANMESFEYKLPADTTAQDLLALVKKLNGDPAVDGILVQLPLPDHLDEQSIIAAISPDKDVDGFHVINAGRLSVGQRGFVPCTPLGCMMLLADRLGDLSGLEAVVIGRSNIVGKPMAQLLLDANATVTIAHSRTRNLPEVVKRADIVVAAVGRAEMVKPEWLKDGATVIDVGINRLPPEPGKERGRLVGDVDFGRASEVAAAITPVPGGVGPMTIAVLLRNTLVAAHRNEGIDLPEDAI.

NADP(+) contacts are provided by residues 166–168 (GRS), S191, and I232.

The protein belongs to the tetrahydrofolate dehydrogenase/cyclohydrolase family. Homodimer.

The enzyme catalyses (6R)-5,10-methylene-5,6,7,8-tetrahydrofolate + NADP(+) = (6R)-5,10-methenyltetrahydrofolate + NADPH. It catalyses the reaction (6R)-5,10-methenyltetrahydrofolate + H2O = (6R)-10-formyltetrahydrofolate + H(+). It participates in one-carbon metabolism; tetrahydrofolate interconversion. Its function is as follows. Catalyzes the oxidation of 5,10-methylenetetrahydrofolate to 5,10-methenyltetrahydrofolate and then the hydrolysis of 5,10-methenyltetrahydrofolate to 10-formyltetrahydrofolate. The protein is Bifunctional protein FolD of Erythrobacter litoralis (strain HTCC2594).